The sequence spans 299 residues: AT-hook motif nuclear-localized protein 25 (299 aa).

2 disordered regions span residues 1–87 (MSSY…RDSP) and 216–251 (EEET…CESN). Basic and acidic residues-rich tracts occupy residues 14–23 (HLQRPEDSRT) and 33–42 (NRSEADEAKA). 2 stretches are compositionally biased toward low complexity: residues 44–72 (TTPT…PAGS) and 224–239 (TTGV…QSSE). The segment at residues 63-75 (RRPRGRPAGSKNK) is a DNA-binding region (a.T hook). The PPC domain occupies 87 to 233 (PNVLRSHVLE…TTGVQQQQPE (147 aa)). The span at 240 to 251 (VTGSGAQACESN) shows a compositional bias: polar residues.

In terms of assembly, homodimer. Interacts with AHL27 and AHL29. In terms of tissue distribution, expressed in seedlings, leaves, stems, floral tips and flowers.

The protein localises to the nucleus. Transcription factor that specifically binds AT-rich DNA sequences related to the nuclear matrix attachment regions (MARs). Binds the DNA sequence GNFEI (GA-negative feedback element I) in the GA3OX1 promoter. Binding to GNFEI sequence is required for GA-negative feedback regulation of GA3OX1. This Arabidopsis thaliana (Mouse-ear cress) protein is AT-hook motif nuclear-localized protein 25.